The sequence spans 156 residues: uncharacterized protein (156 aa).

The segment covering 1-12 (MSSRFARSNGNP) has biased composition (polar residues). The interval 1-27 (MSSRFARSNGNPNHIRKRNHSPDPIGI) is disordered. The residue at position 21 (serine 21) is a Phosphoserine.

It is found in the cytoplasm. It localises to the nucleus. This is an uncharacterized protein from Saccharomyces cerevisiae (strain ATCC 204508 / S288c) (Baker's yeast).